A 100-amino-acid polypeptide reads, in one-letter code: MSEKTLTRMDLSEAVFREVGLSRNESAQLVETVLQHMSDALVRGETVKISSFGTFSVRDKTSRMGRNPKTGEEVPISPRRVLSFRPSHLMKDRVAERNAK.

Belongs to the bacterial histone-like protein family. Heterodimer of an alpha and a beta chain.

Its function is as follows. This protein is one of the two subunits of integration host factor, a specific DNA-binding protein that functions in genetic recombination as well as in transcriptional and translational control. Involved in hydrogenase gene expression. The polypeptide is Integration host factor subunit alpha (ihfA) (Rhodobacter capsulatus (Rhodopseudomonas capsulata)).